Consider the following 115-residue polypeptide: MVSRKAVAALLVVHVAAMLASQTEAFVPIFTYGELQRMQEKERNKGQKKSLSVWQRSGEEGPVDPAEPIREEENEMIKLTAPLEIGMRMNSRQLEKYPATLEGLLSEMLPQHAAK.

The signal sequence occupies residues 1 to 25 (MVSRKAVAALLVVHVAAMLASQTEA). The disordered stretch occupies residues 39 to 72 (QEKERNKGQKKSLSVWQRSGEEGPVDPAEPIREE).

This sequence belongs to the motilin family.

Its subcellular location is the secreted. Its function is as follows. Plays an important role in the regulation of interdigestive gastrointestinal motility and indirectly causes rhythmic contraction of duodenal and colonic smooth muscle. The sequence is that of Promotilin (MLN) from Homo sapiens (Human).